Consider the following 510-residue polypeptide: Histidine ammonia-lyase (510 aa).

Positions 143 to 145 (ASG) form a cross-link, 5-imidazolinone (Ala-Gly). Serine 144 carries the post-translational modification 2,3-didehydroalanine (Ser).

It belongs to the PAL/histidase family. Post-translationally, contains an active site 4-methylidene-imidazol-5-one (MIO), which is formed autocatalytically by cyclization and dehydration of residues Ala-Ser-Gly.

It localises to the cytoplasm. The catalysed reaction is L-histidine = trans-urocanate + NH4(+). It functions in the pathway amino-acid degradation; L-histidine degradation into L-glutamate; N-formimidoyl-L-glutamate from L-histidine: step 1/3. The protein is Histidine ammonia-lyase of Photobacterium profundum (strain SS9).